A 218-amino-acid polypeptide reads, in one-letter code: MRAASQGRYTGPQAESRYVIPRFVERTSQGVREYDPYAKLFEERVIFLGVQIDDASANDVMAQLLCLESMDPDRDISVYINSPGGSFTALTAIYDTMQYVKPDVQTVCMGQAASAAAVLLAAGTPGKRMALPNARVLIHQPYSETGRGQVSDLEIAANEILRMRSQLEEMLAKHSTTPVEKIREDIERDKILTAEDALSYGLIDQIITTRKMDNSSLR.

The active-site Nucleophile is Ser114. His139 is a catalytic residue.

The protein belongs to the peptidase S14 family. In terms of assembly, fourteen ClpP subunits assemble into 2 heptameric rings which stack back to back to give a disk-like structure with a central cavity, resembling the structure of eukaryotic proteasomes.

The protein resides in the cytoplasm. The enzyme catalyses Hydrolysis of proteins to small peptides in the presence of ATP and magnesium. alpha-casein is the usual test substrate. In the absence of ATP, only oligopeptides shorter than five residues are hydrolyzed (such as succinyl-Leu-Tyr-|-NHMec, and Leu-Tyr-Leu-|-Tyr-Trp, in which cleavage of the -Tyr-|-Leu- and -Tyr-|-Trp bonds also occurs).. Functionally, cleaves peptides in various proteins in a process that requires ATP hydrolysis. Has a chymotrypsin-like activity. Plays a major role in the degradation of misfolded proteins. Probably partially responsible for degradation of ECF sigma factor SigR prime. The protein is ATP-dependent Clp protease proteolytic subunit 2 of Streptomyces coelicolor (strain ATCC BAA-471 / A3(2) / M145).